Here is a 103-residue protein sequence, read N- to C-terminus: Large ribosomal subunit protein eL21 (103 aa).

It belongs to the eukaryotic ribosomal protein eL21 family.

This is Large ribosomal subunit protein eL21 from Sulfolobus acidocaldarius (strain ATCC 33909 / DSM 639 / JCM 8929 / NBRC 15157 / NCIMB 11770).